Here is a 278-residue protein sequence, read N- to C-terminus: Beta-lactamase-like protein str5 (278 aa).

A helical transmembrane segment spans residues 20-37 (VFVLAALLSATFAFFTHT). An N-linked (GlcNAc...) asparagine glycan is attached at asparagine 112.

The protein belongs to the beta-lactamase family.

The protein localises to the membrane. The protein operates within mycotoxin biosynthesis. In terms of biological role, beta-lactamase-like protein; part of the gene cluster that mediates the biosynthesis of strobilurin A, an antifungal polyketide that contains a key beta-methoxyacrylate toxophore that targets the complex III of the mitochondrial electron transport chain. Strobilurin biosynthesis begins with construction of benzoyl CoA by step-wise elimination of ammonia from phenylalanine by the phenylalanine ammonia-lyase str11, oxygenation by str8 and retro-Claisen reaction to form benzoic acid, which is activated to its CoA thiolester benzoyl CoA by the dedicated CoA ligase str10. Benzoyl CoA forms the starter unit for the highly reducing polyketide synthase stpks1 that produces the polyketide prestrobilutin A. The FAD-dependent oxygenase str9 then catalyzes the key oxidative rearrangement responsible for the creation of the beta-methoxyacrylate toxophore. Str9 performs epoxidation of the 2,3 olefin of prestrobilutin A, followed by Meinwald rearrangement to furnish the aldehyde intermediate. Rapid enolization of the aldehyde intermediate would give the beta-methoxyacrylate skeleton and methylations catalyzed by str2 and str3 complete the synthesis and lead to the production of strobilurin A. The short-chain dehydrogenase stl2 and the dehydrogenase str4 play a role in the shunt pathway leading to the production of bolineol. The cluster encodes no obvious halogenase gene that could be involved in production of strobilurin B, nor any obvious dimethylallyl-transferase that could be involved in the production of strobilurin G. It is possible that unknown proteins encoded in, or near, the cluster (such as str1 or stl1) may form new classes of halogenases or dimethylally-transferases, or that the responsible genes are located elsewhere on the genome. Similarly, proteins encoded by str5/str6 hydrolases appear to have no chemical role in the biosynthesis of strobilurin A. Finally, no obvious self-resistance gene is found within the cluster. The chain is Beta-lactamase-like protein str5 from Strobilurus tenacellus.